The primary structure comprises 174 residues: Peroxisome assembly protein 22 (174 aa).

The chain crosses the membrane as a helical span at residues 9 to 27 (GYLAIIAAVSIGAAAYLWW).

It belongs to the peroxin-22 family.

It is found in the peroxisome membrane. Its function is as follows. Involved in peroxisome biogenesis. This Candida glabrata (strain ATCC 2001 / BCRC 20586 / JCM 3761 / NBRC 0622 / NRRL Y-65 / CBS 138) (Yeast) protein is Peroxisome assembly protein 22 (PEX22).